The following is a 449-amino-acid chain: Phosphoglucosamine mutase (449 aa).

The active-site Phosphoserine intermediate is the S99. Residues S99, D239, D241, and D243 each coordinate Mg(2+). Position 99 is a phosphoserine (S99).

The protein belongs to the phosphohexose mutase family. It depends on Mg(2+) as a cofactor. Activated by phosphorylation.

It carries out the reaction alpha-D-glucosamine 1-phosphate = D-glucosamine 6-phosphate. Functionally, catalyzes the conversion of glucosamine-6-phosphate to glucosamine-1-phosphate. This is Phosphoglucosamine mutase from Finegoldia magna (strain ATCC 29328 / DSM 20472 / WAL 2508) (Peptostreptococcus magnus).